Consider the following 347-residue polypeptide: Trace amine-associated receptor 4 (347 aa).

Residues 1 to 37 (MNSPDLWYSPETQFCFAAANNSCPRKARPALVVCAMY) lie on the Extracellular side of the membrane. Residue Asn20 is glycosylated (N-linked (GlcNAc...) asparagine). Cystine bridges form between Cys23–Cys187 and Cys106–Cys191. A helical membrane pass occupies residues 38-58 (LVMIGAIVMTMLGNMVVIISI). Over 59 to 69 (AHFKQLHSPTN) the chain is Cytoplasmic. A helical membrane pass occupies residues 70-90 (FLILSMATTDFLLSCVVMPFS). The Extracellular portion of the chain corresponds to 91 to 110 (MVRSIESCWYFGDLFCKVHS). A helical transmembrane segment spans residues 111-129 (CCDIMLCTTSIFHLCFISV). The Cytoplasmic portion of the chain corresponds to 130 to 149 (DRHYAVCDPLHYVTQITVGV). Residues 150–170 (VGVFLLISWSVPILFAFGLVF) traverse the membrane as a helical segment. Over 171–197 (SELNLIGAEDFVAAIDCTGLCVLIFNK) the chain is Extracellular. The interval 175–188 (LIGAEDFVAAIDCT) is extracellular Loop 2 (ECL2). The chain crosses the membrane as a helical span at residues 198–218 (LWGVLASFIAFFLPGAIMVGI). Over 219 to 260 (YIHIFTVARKHARKIGPGPRTKRALSESKMKATSGKESKATK) the chain is Cytoplasmic. Residues 261–281 (TLSIVMGVFVLCWLPFFVLTI) traverse the membrane as a helical segment. At 282–296 (TDPFIGFTTPEDLYN) the chain is on the extracellular side. The helical transmembrane segment at 297–317 (VFLWLGYFNSTFNPIIYGMFY) threads the bilayer. The Cytoplasmic segment spans residues 318-347 (PWFRKALRMIVTGTIFRSDSSTSSLHPAHP).

The protein belongs to the G-protein coupled receptor 1 family.

It is found in the cell membrane. Olfactory receptor specific for 2-phenylethylamine, a trace amine present at high concentration in the urine of carnivore species, playing a key role in fear and avoidance responses. 2-phenylethylamine acts as a kairomone in the chemical detection of carnivore odor and triggers fear in rats. This receptor is probably mediated by the G(s)-class of G-proteins which activate adenylate cyclase. The polypeptide is Trace amine-associated receptor 4 (Rattus norvegicus (Rat)).